Here is a 298-residue protein sequence, read N- to C-terminus: Inosose dehydratase (298 aa).

It belongs to the IolE/MocC family. Glutathione serves as cofactor. Co(2+) is required as a cofactor. It depends on Mn(2+) as a cofactor.

The enzyme catalyses scyllo-inosose = 3D-3,5/4-trihydroxycyclohexane-1,2-dione + H2O. The protein operates within polyol metabolism; myo-inositol degradation into acetyl-CoA; acetyl-CoA from myo-inositol: step 2/7. Functionally, catalyzes the dehydration of inosose (2-keto-myo-inositol, 2KMI or 2,4,6/3,5-pentahydroxycyclohexanone) to 3D-(3,5/4)-trihydroxycyclohexane-1,2-dione (D-2,3-diketo-4-deoxy-epi-inositol). The protein is Inosose dehydratase of Clostridium beijerinckii (strain ATCC 51743 / NCIMB 8052) (Clostridium acetobutylicum).